A 125-amino-acid chain; its full sequence is Large ribosomal subunit protein bL19 (125 aa).

It belongs to the bacterial ribosomal protein bL19 family.

In terms of biological role, this protein is located at the 30S-50S ribosomal subunit interface and may play a role in the structure and function of the aminoacyl-tRNA binding site. This is Large ribosomal subunit protein bL19 from Wolbachia sp. subsp. Brugia malayi (strain TRS).